The chain runs to 181 residues: Probable cobalt-precorrin-6B C(15)-methyltransferase (decarboxylating) (181 aa).

S-adenosyl-L-methionine contacts are provided by residues Thr-16, 40-44 (GCGSG), Asp-61, and Ala-89.

Belongs to the methyltransferase superfamily. Archaeal-type CbiT family.

It carries out the reaction Co-precorrin-6B + S-adenosyl-L-methionine = Co-precorrin-7 + S-adenosyl-L-homocysteine + CO2. It participates in cofactor biosynthesis; adenosylcobalamin biosynthesis; cob(II)yrinate a,c-diamide from sirohydrochlorin (anaerobic route): step 8/10. Its function is as follows. Catalyzes the methylation of C-15 in cobalt-precorrin-6B followed by the decarboxylation of C-12 to form cobalt-precorrin-7. This Methanococcus maripaludis (strain C5 / ATCC BAA-1333) protein is Probable cobalt-precorrin-6B C(15)-methyltransferase (decarboxylating).